The primary structure comprises 1184 residues: Non-receptor tyrosine-protein kinase TYK2 (1184 aa).

The FERM domain occupies Leu33–Ser430. Residues Cys294 to Pro368 form a disordered region. Tyr295 is modified (phosphotyrosine). One can recognise an SH2; atypical domain in the interval Gly449–Leu529. The residue at position 525 (Ser525) is a Phosphoserine. Residues Ile589 to Leu866 form the Protein kinase 1 domain. Phosphotyrosine is present on Tyr604. At Ser881 the chain carries Phosphoserine. Positions Leu894–Leu1166 constitute a Protein kinase 2 domain. Residues Leu900 to Val908 and Lys927 contribute to the ATP site. Residue Asp1020 is the Proton acceptor of the active site. Phosphotyrosine; by autocatalysis is present on Tyr1051. Tyr1052 carries the phosphotyrosine modification.

Belongs to the protein kinase superfamily. Tyr protein kinase family. JAK subfamily. As to quaternary structure, interacts (via FERM domain) with JAKMIP1. Interacts with PIK3R1; this interaction is important for cell migration. Interacts with MPL/TPOR. Post-translationally, phosphorylation by JAK1 at Tyr-1051 and Tyr-1052 induces kinase activation.

The enzyme catalyses L-tyrosyl-[protein] + ATP = O-phospho-L-tyrosyl-[protein] + ADP + H(+). With respect to regulation, the protein kinase 1 domain (also termed pseudokinase domain) mediates autoinhibition of the TYK2 kinase domain. Tyrosine kinase of the non-receptor type involved in numerous cytokines and interferons signaling, which regulates cell growth, development, cell migration, innate and adaptive immunity. Plays both structural and catalytic roles in numerous interleukins and interferons (IFN-alpha/beta) signaling. Associates with heterodimeric cytokine receptor complexes and activates STAT family members including STAT1, STAT3, STAT4 or STAT6. The heterodimeric cytokine receptor complexes are composed of (1) a TYK2-associated receptor chain (IFNAR1, IL12RB1, IL10RB or IL13RA1), and (2) a second receptor chain associated either with JAK1 or JAK2. In response to cytokine-binding to receptors, phosphorylates and activates receptors (IFNAR1, IL12RB1, IL10RB or IL13RA1), creating docking sites for STAT members. In turn, recruited STATs are phosphorylated by TYK2 (or JAK1/JAK2 on the second receptor chain), form homo- and heterodimers, translocate to the nucleus, and regulate cytokine/growth factor responsive genes. Negatively regulates STAT3 activity by promototing phosphorylation at a specific tyrosine that differs from the site used for signaling. This is Non-receptor tyrosine-protein kinase TYK2 from Mus musculus (Mouse).